A 108-amino-acid polypeptide reads, in one-letter code: Nucleoid-associated protein CPS_3743 (108 aa).

Residues 87–108 form a disordered region; the sequence is NKDKMGALTGGMQLPPGMKMPF.

It belongs to the YbaB/EbfC family. As to quaternary structure, homodimer.

The protein localises to the cytoplasm. The protein resides in the nucleoid. In terms of biological role, binds to DNA and alters its conformation. May be involved in regulation of gene expression, nucleoid organization and DNA protection. The chain is Nucleoid-associated protein CPS_3743 from Colwellia psychrerythraea (strain 34H / ATCC BAA-681) (Vibrio psychroerythus).